The sequence spans 373 residues: Enoyl-[acyl-carrier-protein] reductase, mitochondrial (373 aa).

A mitochondrion-targeting transit peptide spans 1–53 (MWVCGALCRTRAPAQLGQRLLPESRRRRPASASFSASAEPSRVRALVYGHHGD). Lys-61 carries the N6-acetyllysine; alternate modification. Position 61 is an N6-succinyllysine; alternate (Lys-61). The Proton donor role is filled by Tyr-94. NADP(+) is bound by residues Asn-167, 193 to 196 (NSGV), and 216 to 218 (RDT). 2 positions are modified to N6-acetyllysine; alternate: Lys-252 and Lys-267. Lys-252 and Lys-267 each carry N6-succinyllysine; alternate. NADP(+)-binding positions include 285–288 (YGGM) and 310–312 (FWL). Residue Lys-316 is modified to N6-succinyllysine. Residue Lys-368 coordinates NADP(+).

This sequence belongs to the zinc-containing alcohol dehydrogenase family. Quinone oxidoreductase subfamily. Homodimer.

Its subcellular location is the mitochondrion. The enzyme catalyses a 2,3-saturated acyl-[ACP] + NADP(+) = a (2E)-enoyl-[ACP] + NADPH + H(+). It carries out the reaction (2E)-butenoyl-[ACP] + NADPH + H(+) = butanoyl-[ACP] + NADP(+). The catalysed reaction is (2E)-hexenoyl-[ACP] + NADPH + H(+) = hexanoyl-[ACP] + NADP(+). It catalyses the reaction (2E)-octenoyl-[ACP] + NADPH + H(+) = octanoyl-[ACP] + NADP(+). The enzyme catalyses (2E)-decenoyl-[ACP] + NADPH + H(+) = decanoyl-[ACP] + NADP(+). It carries out the reaction (2E)-dodecenoyl-[ACP] + NADPH + H(+) = dodecanoyl-[ACP] + NADP(+). The catalysed reaction is (2E)-tetradecenoyl-[ACP] + NADPH + H(+) = tetradecanoyl-[ACP] + NADP(+). It catalyses the reaction (2E)-hexadecenoyl-[ACP] + NADPH + H(+) = hexadecanoyl-[ACP] + NADP(+). Catalyzes the NADPH-dependent reduction of trans-2-enoyl thioesters in mitochondrial fatty acid synthesis (fatty acid synthesis type II). Fatty acid chain elongation in mitochondria uses acyl carrier protein (ACP) as an acyl group carrier, but the enzyme accepts both ACP and CoA thioesters as substrates in vitro. Displays a preference for medium-chain over short- and long-chain substrates. May provide the octanoyl chain used for lipoic acid biosynthesis, regulating protein lipoylation and mitochondrial respiratory activity particularly in Purkinje cells. Involved in iron homeostasis; affecting Fe-S cluster assembly and ceramide metabolism. Required for proper morphology and bioenergetic functions of mitochondria. Required for maintenance of neurons. In Bos taurus (Bovine), this protein is Enoyl-[acyl-carrier-protein] reductase, mitochondrial (MECR).